The sequence spans 337 residues: Ketol-acid reductoisomerase (NADP(+)) (337 aa).

The KARI N-terminal Rossmann domain maps to 3 to 183 (VEMFYDDDAD…GGARAGVIKT (181 aa)). Residues 26–29 (YGSQ), Lys49, Ser52, Ser54, and 84–87 (DTAQ) each bind NADP(+). The active site involves His109. Gly135 serves as a coordination point for NADP(+). The region spanning 184–329 (TFKEETETDL…KKLRDLMSWV (146 aa)) is the KARI C-terminal knotted domain. Mg(2+) is bound by residues Asp192, Glu196, Glu228, and Glu232. Ser253 is a substrate binding site.

It belongs to the ketol-acid reductoisomerase family. The cofactor is Mg(2+).

It catalyses the reaction (2R)-2,3-dihydroxy-3-methylbutanoate + NADP(+) = (2S)-2-acetolactate + NADPH + H(+). The enzyme catalyses (2R,3R)-2,3-dihydroxy-3-methylpentanoate + NADP(+) = (S)-2-ethyl-2-hydroxy-3-oxobutanoate + NADPH + H(+). It functions in the pathway amino-acid biosynthesis; L-isoleucine biosynthesis; L-isoleucine from 2-oxobutanoate: step 2/4. The protein operates within amino-acid biosynthesis; L-valine biosynthesis; L-valine from pyruvate: step 2/4. Its function is as follows. Involved in the biosynthesis of branched-chain amino acids (BCAA). Catalyzes an alkyl-migration followed by a ketol-acid reduction of (S)-2-acetolactate (S2AL) to yield (R)-2,3-dihydroxy-isovalerate. In the isomerase reaction, S2AL is rearranged via a Mg-dependent methyl migration to produce 3-hydroxy-3-methyl-2-ketobutyrate (HMKB). In the reductase reaction, this 2-ketoacid undergoes a metal-dependent reduction by NADPH to yield (R)-2,3-dihydroxy-isovalerate. The polypeptide is Ketol-acid reductoisomerase (NADP(+)) (Rhodococcus opacus (strain B4)).